A 516-amino-acid polypeptide reads, in one-letter code: MNATMQRSAVAGRTSGKVATTARASSMARPRLPIAGRVARRSAVTVRAVAEPVVVDKAVEAPAKPVPSGGDPWEDEKWTKYKWTVYRGVAYDLTPYLDRHPGGRWLLNLAIGRDATALFESYHLRPEVAASMLKRLPVLADFPVDAVPPSPRPNDSELYNAIRERVRKEVFKGTEIKGAHRSGSEGAAFAVLGYAAAMYALYTYDANPLTGALLGLGGAWIGLTIQHCGNHGAMSTNPVVNNLMGLTNDLAGGSSLMWRYHHQVSHHIHCNDDALDEDVFSAFPMLRFDDRLPKAWYHQFQHVYMWALFPFLQLVFQIGDWQALLTNRTVGATLYGASNFERQTLIAGKLAHYFLLYGLPAFLHGPTAMLGGAAGYLFTQSIVLAATFAVSHNVPETKPLDPGPTRENLDESAVTRDWGVQQVLTSANWGGVIGNFFTGGLNLQIEHHLFPAISFMHYPAISKIVADECKQRGIPYSHYDTLPEILGRFVRYMKEVGAAPQKPVKRDGEMLMLSKF.

Residues 1-25 (MNATMQRSAVAGRTSGKVATTARAS) are disordered. Residues 1–47 (MNATMQRSAVAGRTSGKVATTARASSMARPRLPIAGRVARRSAVTVR) constitute a chloroplast transit peptide. Residues 83–148 (WTVYRGVAYD…LADFPVDAVP (66 aa)) enclose the Cytochrome b5 heme-binding domain. Residues histidine 100 and histidine 123 each coordinate heme. The next 2 helical transmembrane spans lie at 186–206 (GAAF…TYDA) and 209–229 (LTGA…QHCG). The Histidine box-1 motif lies at 227–231 (HCGNH). A Histidine box-2 motif is present at residues 262-267 (HQVSHH). The next 4 membrane-spanning stretches (helical) occupy residues 305 to 325 (MWAL…QALL), 354 to 374 (FLLY…GGAA), 375 to 395 (GYLF…HNVP), and 423 to 443 (VLTS…GLNL). A Histidine box-3 motif is present at residues 444–448 (QIEHH).

The protein belongs to the fatty acid desaturase type 1 family. Requires Fe(2+) as cofactor.

The protein localises to the plastid. It localises to the chloroplast membrane. It carries out the reaction a (7Z,10Z,13Z,16Z,19Z)-docosapentaenoyl-containing glycerolipid + 2 Fe(II)-[cytochrome b5] + O2 + 2 H(+) = a (4Z,7Z,10Z,13Z,16Z,19Z)-docosahexaenoyl-containing glycerolipid + 2 Fe(III)-[cytochrome b5] + 2 H2O. The catalysed reaction is a (7Z,10Z,13Z,16Z)-docosatetraenoyl-containing glycerolipid + 2 Fe(II)-[cytochrome b5] + O2 + 2 H(+) = a (4Z,7Z,10Z,13Z,16Z)-docosapentaenoyl-containing glycerolipid + 2 Fe(III)-[cytochrome b5] + 2 H2O. Fatty acid desaturase that introduces a cis double bond at the 4-position in 16-carbon polyunsaturated fatty acids that contain a Delta(7) double bond, resulting in the production of 16 carbon fatty acid (7Z,10Z,13Z)-hexadeca-7,10,13-trienoate. The sequence is that of Acyl-lipid (7-3)-desaturase, chloroplastic from Chlamydomonas reinhardtii (Chlamydomonas smithii).